A 667-amino-acid chain; its full sequence is Flavin-dependent halogenase malA (667 aa).

Residues His48, Glu70, Ile79, and Ser82 each contribute to the FAD site. The active site involves Lys108. Residues Arg144, Val168, Asp399, and Ile412 each contribute to the FAD site. A substrate-binding site is contributed by Glu494. 4 residues coordinate Zn(2+): Cys597, Cys600, Cys613, and Cys616. The interval 621-646 (TEPQTAVTFDPPLTAEEEALLYAAWN) is flexible region.

This sequence belongs to the flavin-dependent halogenase family. Zn(2+) is required as a cofactor.

It carries out the reaction (+)-premalbrancheamide + 2 FAD + 2 chloride + 4 H(+) = (+)-malbrancheamide + 2 FADH2. The enzyme catalyses (+)-premalbrancheamide + FAD + chloride + 2 H(+) = (+)-malbrancheamide B + FADH2. It catalyses the reaction (+)-premalbrancheamide + FAD + chloride + 2 H(+) = (+)-isomalbrancheamide B + FADH2. The catalysed reaction is (+)-malbrancheamide B + FAD + chloride + 2 H(+) = (+)-malbrancheamide + FADH2. It carries out the reaction (+)-isomalbrancheamide B + FAD + chloride + 2 H(+) = (+)-malbrancheamide + FADH2. The enzyme catalyses (+)-premalbrancheamide + bromide + FAD + 2 H(+) = (+)-malbrancheamide C + FADH2. It catalyses the reaction (+)-premalbrancheamide + bromide + FAD + 2 H(+) = (+)-isomalbrancheamide C + FADH2. The catalysed reaction is (+)-malbrancheamide B + bromide + FAD + 2 H(+) = (+)-malbrancheamide D + FADH2. It carries out the reaction (+)-isomalbrancheamide B + bromide + FAD + 2 H(+) = (+)-isomalbrancheamide D + FADH2. Its pathway is alkaloid biosynthesis. Functionally, flavin-dependent halogenase; part of the gene cluster that mediates the biosynthesis of malbrancheamide, a dichlorinated fungal indole alkaloid that belongs to a family of natural products containing a characteristic bicyclo[2.2.2]diazaoctane core. The first step of malbrancheamide biosynthesis involves coupling of L-proline and L-tryptophan by malG, a bimodular NRPS, to produce L-Pro-L-Trp aldehyde through reductive offloading. This compound undergoes spontaneous cyclization and dehydration to give a dienamine which is reverse prenylated at C-2 by malE. The other prenyltransferase present in the cluster, malB, displays modest activity, suggesting that may be a redundant gene in the pathway. Subsequently, a [4+2] Diels-Alder cyclo-addition catalyzed by the bifunctional enzyme malC forms the characteristic bicyclo[2.2.2]diazaoctane ring of premalbrancheamid. Finally, the flavin-dependent halogenase malA catalyzes the iterative dichlorination of the indole ring of premalbrancheamide to yield C-9 monochlorinated malbrancheamide B, C-8 monochlorinated isomalbrancheamide B, and dichlorinated malbrancheamide. MalA is also able to brominate premalbrancheamide at C-9 to yield malbrancheamide C, and, to a lesser extend, at C-8 to yield isomalbrancheamide C. Finally, malA can brominate C-9 monochlorinated malbrancheamide B at C-8 to yield malbrancheamide D, or C-8 monochlorinated isomalbrancheamide B at C-9 to produce isomalbrancheamide D. The chain is Flavin-dependent halogenase malA from Malbranchea aurantiaca.